A 261-amino-acid chain; its full sequence is Triosephosphate isomerase (261 aa).

Position 10-12 (10-12) interacts with substrate; it reads NWK. His-100 acts as the Electrophile in catalysis. The active-site Proton acceptor is Glu-172. Residues Gly-178, Ser-218, and 239-240 contribute to the substrate site; that span reads GG.

It belongs to the triosephosphate isomerase family. As to quaternary structure, homodimer.

It is found in the cytoplasm. The catalysed reaction is D-glyceraldehyde 3-phosphate = dihydroxyacetone phosphate. Its pathway is carbohydrate biosynthesis; gluconeogenesis. It participates in carbohydrate degradation; glycolysis; D-glyceraldehyde 3-phosphate from glycerone phosphate: step 1/1. Its function is as follows. Involved in the gluconeogenesis. Catalyzes stereospecifically the conversion of dihydroxyacetone phosphate (DHAP) to D-glyceraldehyde-3-phosphate (G3P). The chain is Triosephosphate isomerase from Mycobacterium marinum (strain ATCC BAA-535 / M).